Reading from the N-terminus, the 700-residue chain is Auxin response factor 18 (700 aa).

The segment at residues 128-230 (FAKTLTQSDA…DLCVGIRRAK (103 aa)) is a DNA-binding region (TF-B3). Disordered regions lie at residues 234-254 (VGGPEFLPPPPPPPPTPAAGG) and 560-595 (VKKSSSDGNAENTVNKSNSDVSSPRSNQNGTTDNLS). Positions 239 to 250 (FLPPPPPPPPTP) are enriched in pro residues. Over residues 565 to 594 (SDGNAENTVNKSNSDVSSPRSNQNGTTDNL) the composition is skewed to polar residues. In terms of domain architecture, PB1 spans 614–697 (TGHCKVFMQS…NILTDTSGDN (84 aa)).

This sequence belongs to the ARF family. As to quaternary structure, homodimers and heterodimers. In terms of tissue distribution, expressed in roots, culms, leaves and young panicles.

It localises to the nucleus. Auxin response factors (ARFs) are transcriptional factors that bind specifically to the DNA sequence 5'-TGTCTC-3' found in the auxin-responsive promoter elements (AuxREs). In Oryza sativa subsp. japonica (Rice), this protein is Auxin response factor 18 (ARF18).